The chain runs to 1643 residues: Lysine-specific demethylase 6B (1643 aa).

Disordered regions lie at residues 52-88 (GQPPLPAPLPPSHGSSSGHPSKPYYAPGAPTPRPLHG), 190-680 (AKRG…PLED), 704-807 (ESIR…LKSL), and 822-1096 (GAAV…RSLS). Composition is skewed to low complexity over residues 63–74 (SHGSSSGHPSKP) and 212–223 (AALSGPSGEEGL). Position 224 is a phosphoserine (serine 224). Pro residues predominate over residues 242–266 (PGLPLPPPPLPPPPPPPPPPPPPLP). Basic and acidic residues predominate over residues 291 to 307 (GPERKGSAPPERQEQRH). Residues 332–342 (AAPPGPGPRPP) are compositionally biased toward pro residues. Residues 359–370 (DLRESRVQRSRM) are compositionally biased toward basic and acidic residues. Low complexity predominate over residues 394–412 (PGTTTSSSSSSSSNTGLRG). Positions 460-484 (SLPPGPSSPPPPPCPRLLRPPPPPA) are enriched in pro residues. Low complexity predominate over residues 550-569 (TTSSSNSNSGSHSSSPAGPV). 2 stretches are compositionally biased toward pro residues: residues 584 to 600 (LPRPPSPAQNPQDPPLV) and 641 to 658 (GPGPPPGPLSKAPQPVPP). Residues 704–714 (ESIRKEEEQQQ) are compositionally biased toward basic and acidic residues. Positions 740–764 (TAPTTTAPAVAVTTTTTTTTTTTAT) are enriched in low complexity. Pro residues predominate over residues 772 to 800 (PPALPPPPPLAKFPPPSQPQPPPPPPPSP). The segment covering 843-877 (SGATALPPTSAAPSAQGSPQPSASSSSQFSTSGGP) has biased composition (low complexity). Positions 889-904 (VPGPMTPTQPPPPLSL) are enriched in pro residues. The span at 916 to 929 (EISRACETLVERVG) shows a compositional bias: basic and acidic residues. The span at 972–989 (CKRRQKEHQKEHRRHRRA) shows a compositional bias: basic residues. The span at 990 to 1003 (CKDSVGRRPREGRA) shows a compositional bias: basic and acidic residues. Residues 1004–1016 (KAKAKVPKEKSRR) show a composition bias toward basic residues. Positions 1047–1067 (PTAPAPPSAPAPSAQPTPPSA) are enriched in pro residues. Residue lysine 1109 forms a Glycyl lysine isopeptide (Lys-Gly) (interchain with G-Cter in SUMO2) linkage. Residues 1288–1325 (FQESLQEEKESEDEESEEPDSTTGTPPSSAPDPKNHHI) are disordered. Residues 1296–1307 (KESEDEESEEPD) are compositionally biased toward acidic residues. Positions 1339–1502 (RWKPQLQELL…YQLALERYEW (164 aa)) constitute a JmjC domain. The Fe cation site is built by histidine 1390, glutamate 1392, and histidine 1470. Zn(2+) is bound by residues cysteine 1575, cysteine 1578, cysteine 1602, and cysteine 1605.

This sequence belongs to the UTX family. Interacts with TLE1. Component of the MLL4 complex, at least composed of KMT2B/MLL4, ASH2L, RBBP5, WDR5, and KDM6B. Interacts with TBX21, SMARCA4, SMARCC1 and SMARCC2. The cofactor is L-ascorbate. It depends on Fe(2+) as a cofactor.

It localises to the nucleus. It catalyses the reaction N(6),N(6),N(6)-trimethyl-L-lysyl(27)-[histone H3] + 2 2-oxoglutarate + 2 O2 = N(6)-methyl-L-lysyl(27)-[histone H3] + 2 formaldehyde + 2 succinate + 2 CO2. Its function is as follows. Histone demethylase that specifically demethylates 'Lys-27' of histone H3, thereby playing a central role in histone code. Demethylates trimethylated and dimethylated H3 'Lys-27'. Plays a central role in regulation of posterior development, by regulating HOX gene expression. Involved in inflammatory response by participating in macrophage differentiation in case of inflammation by regulating gene expression and macrophage differentiation. Plays a demethylase-independent role in chromatin remodeling to regulate T-box family member-dependent gene expression by acting as a link between T-box factors and the SMARCA4-containing SWI/SNF remodeling complex. This is Lysine-specific demethylase 6B (KDM6B) from Homo sapiens (Human).